Consider the following 458-residue polypeptide: Methionine aminopeptidase 2-2 (458 aa).

The segment covering 1–14 (MGSKTPERDGHKGQ) has biased composition (basic and acidic residues). The interval 1–93 (MGSKTPERDG…QSSPPRVPLS (93 aa)) is disordered. The span at 67–82 (QKKKRKSKKKGKKKAA) shows a compositional bias: basic residues. His-209 contributes to the substrate binding site. Positions 230, 241, and 310 each coordinate a divalent metal cation. His-318 is a binding site for substrate. Residues Glu-343 and Glu-439 each coordinate a divalent metal cation.

The protein belongs to the peptidase M24A family. Methionine aminopeptidase eukaryotic type 2 subfamily. It depends on Co(2+) as a cofactor. Zn(2+) is required as a cofactor. Mn(2+) serves as cofactor. Requires Fe(2+) as cofactor.

Its subcellular location is the cytoplasm. It catalyses the reaction Release of N-terminal amino acids, preferentially methionine, from peptides and arylamides.. Functionally, cotranslationally removes the N-terminal methionine from nascent proteins. The N-terminal methionine is often cleaved when the second residue in the primary sequence is small and uncharged (Met-Ala-, Cys, Gly, Pro, Ser, Thr, or Val). This is Methionine aminopeptidase 2-2 from Emericella nidulans (strain FGSC A4 / ATCC 38163 / CBS 112.46 / NRRL 194 / M139) (Aspergillus nidulans).